The primary structure comprises 252 residues: Large ribosomal subunit protein uL4 (252 aa).

This sequence belongs to the universal ribosomal protein uL4 family. In terms of assembly, part of the 50S ribosomal subunit.

Its function is as follows. One of the primary rRNA binding proteins, this protein initially binds near the 5'-end of the 23S rRNA. It is important during the early stages of 50S assembly. It makes multiple contacts with different domains of the 23S rRNA in the assembled 50S subunit and ribosome. In terms of biological role, forms part of the polypeptide exit tunnel. In Methanococcus maripaludis (strain DSM 14266 / JCM 13030 / NBRC 101832 / S2 / LL), this protein is Large ribosomal subunit protein uL4.